Reading from the N-terminus, the 490-residue chain is MSQSVSERTRIKSDRYESGVIPYAKMGYWDAAYTVKDTDVLALFRITPQPGVDPVEAAAAVAGESSTATWTVVWTDLLTACERYRAKAYRVDPVPNSPDVYLAFNAYECDLFEEASLSNLTASIIGNVFGFKAVAALRLEDMRIPHSYLKTFQGPATGIVVERERLNKYGTPLLGATVKPKLGLSGKNYGRVVYEGLKGGLDFLKDDENINSQPFMRWRERFLNCLEGINRAAAATGEVKGSYLNITAATMEEVYKRAEYAKAIGSVLVMIDLVMGYTAIQSIAYWARENDMLLHLHRAGNSTYARQKNHGINFRVFCKWMRMSGVDHIHAGTVVGKLEGDPLMIKGFYDILRLTELEVNLPFGVFFEMDWASLRRCMPVASGGIHCGQMHQLIHYLGDDVVLQFGGGTIGHPDGIQAGATANRVALEAMVFSRNEGADFFNNQVGPQILRDAAKTCGPLQTALDLWKDISFNYTSTDTADFAETATANR.

The substrate site is built by asparagine 127 and threonine 177. The active-site Proton acceptor is lysine 179. Lysine 181 contributes to the substrate binding site. 3 residues coordinate Mg(2+): lysine 205, aspartate 207, and glutamate 208. The residue at position 205 (lysine 205) is an N6-carboxylysine. Histidine 297 serves as the catalytic Proton acceptor. The substrate site is built by arginine 298, histidine 330, and serine 382.

The protein belongs to the RuBisCO large chain family. Type I subfamily. Heterohexadecamer of 8 large chains and 8 small chains. It depends on Mg(2+) as a cofactor.

The protein resides in the plastid. Its subcellular location is the chloroplast. It carries out the reaction 2 (2R)-3-phosphoglycerate + 2 H(+) = D-ribulose 1,5-bisphosphate + CO2 + H2O. The enzyme catalyses D-ribulose 1,5-bisphosphate + O2 = 2-phosphoglycolate + (2R)-3-phosphoglycerate + 2 H(+). Functionally, ruBisCO catalyzes two reactions: the carboxylation of D-ribulose 1,5-bisphosphate, the primary event in carbon dioxide fixation, as well as the oxidative fragmentation of the pentose substrate in the photorespiration process. Both reactions occur simultaneously and in competition at the same active site. This chain is Ribulose bisphosphate carboxylase large chain, found in Thalassiosira nordenskioeldii (Marine diatom).